The sequence spans 931 residues: MNKQRFVVIDVETTGNSPKKGDKIIQIAAVVIENGQITERFSKYINPNKSIPAFIEQLTGISNQMVENEQPFEAVAEEVFQLLDGAYFVAHNIHFDLGFVKYELHKAGFQLPDCEVLDTVELSRIVFPGFEGYKLTELSEELQLRHDQPHRADSDAEVTGLIFLEILEKLRQLPYPTLKQLRRLSQHFISDLTHLLDMFINENRHTEIPGYTRFSSFSVREPEAIDVRINEDENFSFEIESWEAGNEKALSELMPGYEKRDGQMMMMREVADAFANREHALIEAPPGIGKTIGYLIPAALFAKKSKKPVIISTYSTLLQQQILTKDLPIVQDLFPFPVTAAILKGQSHYLCLYKFEQVLHEEDDNYDAVLTKAQLLVWLTETNTGDVAELNLPSGGKLLWDRLAYDDDSYKRSRSEHVIGFYERAKQIAMRSDLVITNHSLLLTDEGSHKKRLPESGTFIIDEAHHFERAASEHLGKRATYIELHTKLSRIGTLKEQGLLKKMRQLFQRNSLPVDSFFELEEWLQHVQAESDAFFSSVHSFVKRRKPKEDLNRLVFKVNKESQDKSWSILTDGAERLCSMLTHLQQLFEAQSSLMEKHLKGMKSKTVFLADEYQRSMKGLQHYCQTLQKLFFGSDDDEAVWIEIDAKGAKNAVAIYAQPLEPGELLADQFFARKNSVVLTSATLTVEGSFQFMIERLGLSDFFPRTMRIESPFSYDERMQVMIPKEMKSIQDTGQPEFIQDTARYIELMAKEKQPKILVLFTSHDMLKKVHQELKHNMSASGIQLLAQGITGGSPGKLMKTFKTSNQAILLGTNHFWEGVDFPGDELTTVMIVRLPFRSPDHPLHAAKCELARKKGKNPFQTVSLPEAVLTFRQGIGRLLRSAGDKGTIIILDRRIKTAGYGRLFLDALPTTSVSEMTDSELEAYVAGEKE.

Positions 7 to 162 constitute an Exonuclease domain; sequence VVIDVETTGN…DSDAEVTGLI (156 aa). In terms of domain architecture, Helicase ATP-binding spans 250-510; that stretch reads LSELMPGYEK…KKMRQLFQRN (261 aa). 284-291 contributes to the ATP binding site; it reads APPGIGKT. Positions 462–465 match the DEAH box motif; it reads DEAH. A Helicase C-terminal domain is found at 741 to 897; that stretch reads DTARYIELMA…TIIILDRRIK (157 aa).

It belongs to the helicase family. DinG subfamily. Type 2 sub-subfamily.

The protein resides in the cytoplasm. Functionally, 3'-5' exonuclease. This is 3'-5' exonuclease DinG from Bacillus subtilis (strain 168).